We begin with the raw amino-acid sequence, 121 residues long: Small ribosomal subunit protein bS16 (121 aa).

A compositionally biased stretch (basic and acidic residues) spans 97–114 (LAKAKTKDGDNDSSKAES). Residues 97–121 (LAKAKTKDGDNDSSKAESESNEAET) are disordered.

It belongs to the bacterial ribosomal protein bS16 family.

This Prochlorococcus marinus (strain MIT 9301) protein is Small ribosomal subunit protein bS16.